A 61-amino-acid chain; its full sequence is Large ribosomal subunit protein eL37 (61 aa).

Cys-20, Cys-23, Cys-35, and Cys-38 together coordinate Zn(2+). The C4-type zinc finger occupies 20–38 (CPRCGRHSYNIVKGYCAAC).

Belongs to the eukaryotic ribosomal protein eL37 family. Requires Zn(2+) as cofactor.

In terms of biological role, binds to the 23S rRNA. The sequence is that of Large ribosomal subunit protein eL37 from Caldivirga maquilingensis (strain ATCC 700844 / DSM 13496 / JCM 10307 / IC-167).